The following is a 564-amino-acid chain: NAC domain-containing protein 16 (564 aa).

The NAC domain maps to 16-166 (SAPGFRFHPT…YYALYKLYKK (151 aa)). Residues 115-172 (VGLKKTLVFYRGRAPNGERTDWVMHEYTMDEEELGRCKNAKEYYALYKLYKKSGAGPK) mediate DNA binding. A helical membrane pass occupies residues 535–555 (FLLLSIMGALCAIFWVFKATV).

In terms of tissue distribution, expressed in roots, rosette leaves, shoot apex, stems and flowers.

The protein resides in the membrane. Its subcellular location is the nucleus. Transcriptional activator activated by proteolytic cleavage through regulated intramembrane proteolysis (RIP). Transcriptional activator that promotes leaf senescence by up-regulating senescence-associated genes in response to developmental and stress-induced senescence signals. Functions in salt and oxidative stress-responsive signaling pathways. Binds to the promoter of NAC029/NAP and NAC059/ORS1 genes. This is NAC domain-containing protein 16 from Arabidopsis thaliana (Mouse-ear cress).